A 550-amino-acid polypeptide reads, in one-letter code: Hydroxylamine reductase (550 aa).

Positions 3, 6, 18, and 25 each coordinate [2Fe-2S] cluster. 8 residues coordinate hybrid [4Fe-2O-2S] cluster: His-249, Glu-273, Cys-317, Cys-405, Cys-433, Cys-458, Glu-492, and Lys-494. Cys-405 bears the Cysteine persulfide mark.

The protein belongs to the HCP family. Requires [2Fe-2S] cluster as cofactor. Hybrid [4Fe-2O-2S] cluster serves as cofactor.

It is found in the cytoplasm. The enzyme catalyses A + NH4(+) + H2O = hydroxylamine + AH2 + H(+). Catalyzes the reduction of hydroxylamine to form NH(3) and H(2)O. This Salmonella schwarzengrund (strain CVM19633) protein is Hydroxylamine reductase.